A 165-amino-acid polypeptide reads, in one-letter code: Nucleotide-binding protein SYNW1816 (165 aa).

Belongs to the YajQ family.

In terms of biological role, nucleotide-binding protein. In Parasynechococcus marenigrum (strain WH8102), this protein is Nucleotide-binding protein SYNW1816.